A 468-amino-acid chain; its full sequence is ATP synthase subunit beta (468 aa).

Position 148–155 (148–155 (GGAGVGKT)) interacts with ATP.

Belongs to the ATPase alpha/beta chains family. F-type ATPases have 2 components, CF(1) - the catalytic core - and CF(0) - the membrane proton channel. CF(1) has five subunits: alpha(3), beta(3), gamma(1), delta(1), epsilon(1). CF(0) has three main subunits: a(1), b(2) and c(9-12). The alpha and beta chains form an alternating ring which encloses part of the gamma chain. CF(1) is attached to CF(0) by a central stalk formed by the gamma and epsilon chains, while a peripheral stalk is formed by the delta and b chains.

It is found in the cell inner membrane. The enzyme catalyses ATP + H2O + 4 H(+)(in) = ADP + phosphate + 5 H(+)(out). In terms of biological role, produces ATP from ADP in the presence of a proton gradient across the membrane. The catalytic sites are hosted primarily by the beta subunits. The chain is ATP synthase subunit beta from Xanthomonas oryzae pv. oryzae (strain KACC10331 / KXO85).